Consider the following 842-residue polypeptide: Protein translocase subunit SecA (842 aa).

ATP contacts are provided by residues Q91, 109-113 (GEGKT), and D498. The segment covering 798–824 (QGQHVSAEDGKEKVKPQPVVKDNHIGR) has biased composition (basic and acidic residues). Residues 798 to 827 (QGQHVSAEDGKEKVKPQPVVKDNHIGRNDP) form a disordered region. Residues C828, C830, C839, and C840 each coordinate Zn(2+).

This sequence belongs to the SecA family. As to quaternary structure, monomer and homodimer. Part of the essential Sec protein translocation apparatus which comprises SecA, SecYEG and auxiliary proteins SecDF. Other proteins may also be involved. Zn(2+) is required as a cofactor.

It localises to the cell membrane. It is found in the cytoplasm. The catalysed reaction is ATP + H2O + cellular proteinSide 1 = ADP + phosphate + cellular proteinSide 2.. In terms of biological role, part of the Sec protein translocase complex. Interacts with the SecYEG preprotein conducting channel. Has a central role in coupling the hydrolysis of ATP to the transfer of proteins into and across the cell membrane, serving as an ATP-driven molecular motor driving the stepwise translocation of polypeptide chains across the membrane. This chain is Protein translocase subunit SecA, found in Staphylococcus carnosus (strain TM300).